A 1102-amino-acid chain; its full sequence is Carbamoyl phosphate synthase large chain (1102 aa).

A carboxyphosphate synthetic domain region spans residues 1–408; the sequence is MPKRTDIQSV…AFQKALRSLE (408 aa). ATP contacts are provided by Arg-129, Arg-175, Gly-181, Gly-182, Glu-214, Ile-216, Glu-221, Gly-247, Val-248, His-249, Gln-291, and Glu-305. One can recognise an ATP-grasp 1 domain in the interval 137-334; the sequence is EEVRKKIGHG…IAKIAAKLAV (198 aa). Residues Gln-291, Glu-305, and Asn-307 each coordinate Mg(2+). Positions 291, 305, and 307 each coordinate Mn(2+). An oligomerization domain region spans residues 409–551; sequence KKGSQFTFVG…YFYSSYDEES (143 aa). Residues 552–954 are carbamoyl phosphate synthetic domain; the sequence is EVAPREKPAV…AYAKSQAGAY (403 aa). Residues 682–873 enclose the ATP-grasp 2 domain; that stretch reads GRVLAEAGLP…LAKAAARISL (192 aa). ATP contacts are provided by Arg-718, Arg-757, Leu-759, Glu-764, Gly-789, Ile-790, His-791, Ser-792, Gln-832, and Glu-844. Mg(2+) is bound by residues Gln-832, Glu-844, and Asn-846. 3 residues coordinate Mn(2+): Gln-832, Glu-844, and Asn-846. The region spanning 955–1100 is the MGS-like domain; that stretch reads GPLPTKGRAF…QEHAAFLIAA (146 aa). Residues 955–1102 are allosteric domain; sequence GPLPTKGRAF…HAAFLIAARD (148 aa).

This sequence belongs to the CarB family. Composed of two chains; the small (or glutamine) chain promotes the hydrolysis of glutamine to ammonia, which is used by the large (or ammonia) chain to synthesize carbamoyl phosphate. Tetramer of heterodimers (alpha,beta)4. Mg(2+) serves as cofactor. Requires Mn(2+) as cofactor.

The catalysed reaction is hydrogencarbonate + L-glutamine + 2 ATP + H2O = carbamoyl phosphate + L-glutamate + 2 ADP + phosphate + 2 H(+). It carries out the reaction hydrogencarbonate + NH4(+) + 2 ATP = carbamoyl phosphate + 2 ADP + phosphate + 2 H(+). It participates in amino-acid biosynthesis; L-arginine biosynthesis; carbamoyl phosphate from bicarbonate: step 1/1. The protein operates within pyrimidine metabolism; UMP biosynthesis via de novo pathway; (S)-dihydroorotate from bicarbonate: step 1/3. Its function is as follows. Large subunit of the glutamine-dependent carbamoyl phosphate synthetase (CPSase). CPSase catalyzes the formation of carbamoyl phosphate from the ammonia moiety of glutamine, carbonate, and phosphate donated by ATP, constituting the first step of 2 biosynthetic pathways, one leading to arginine and/or urea and the other to pyrimidine nucleotides. The large subunit (synthetase) binds the substrates ammonia (free or transferred from glutamine from the small subunit), hydrogencarbonate and ATP and carries out an ATP-coupled ligase reaction, activating hydrogencarbonate by forming carboxy phosphate which reacts with ammonia to form carbamoyl phosphate. The protein is Carbamoyl phosphate synthase large chain of Streptomyces coelicolor (strain ATCC BAA-471 / A3(2) / M145).